Consider the following 127-residue polypeptide: MNTPKELRYSEEHEWVRVEGDKVRIGITDFAQSELGDIVFVELPEVGAEITANEPFGSVESVKTVSELYAPISGKVVEVNEELNDNPEYVNESPYEKAWMIVVEPYDMSEIDNLLTAEQYEEMVKEG.

One can recognise a Lipoyl-binding domain in the interval 22-104 (KVRIGITDFA…YEKAWMIVVE (83 aa)). The residue at position 63 (Lys-63) is an N6-lipoyllysine.

Belongs to the GcvH family. In terms of assembly, the glycine cleavage system is composed of four proteins: P, T, L and H. (R)-lipoate serves as cofactor.

The glycine cleavage system catalyzes the degradation of glycine. The H protein shuttles the methylamine group of glycine from the P protein to the T protein. Functionally, is also involved in protein lipoylation via its role as an octanoyl/lipoyl carrier protein intermediate. This Geobacillus sp. (strain WCH70) protein is Glycine cleavage system H protein.